Here is a 143-residue protein sequence, read N- to C-terminus: MAKKVAGQLKLQVKAGSANPSPPIGPALGQRGVNIMEFCKAFNAATQEMEKGMPIPVVITYYQDKSFTFIMKQPPVTYWLKKEAKIQSGSKTPGKGGKAGTITKAQVRTIAEAKMKDLNAADVDGAMAMVEGSARSMGLEVVG.

Belongs to the universal ribosomal protein uL11 family. Part of the ribosomal stalk of the 50S ribosomal subunit. Interacts with L10 and the large rRNA to form the base of the stalk. L10 forms an elongated spine to which L12 dimers bind in a sequential fashion forming a multimeric L10(L12)X complex. One or more lysine residues are methylated.

Its function is as follows. Forms part of the ribosomal stalk which helps the ribosome interact with GTP-bound translation factors. The polypeptide is Large ribosomal subunit protein uL11 (Allorhizobium ampelinum (strain ATCC BAA-846 / DSM 112012 / S4) (Agrobacterium vitis (strain S4))).